The chain runs to 976 residues: Dibasic-processing endoprotease (976 aa).

The N-terminal stretch at 1-17 is a signal peptide; it reads MLRKFILGLLLASQAVA. Asn156 carries an N-linked (GlcNAc...) asparagine glycan. The segment covering 172 to 212 has biased composition (basic and acidic residues); sequence AEEAQKAQDDKGDKKEDQKDDKKEGQEAQKEGDKEDNKGDD. The disordered stretch occupies residues 172 to 246; it reads AEEAQKAQDD…VQWKPVDESM (75 aa). Positions 213-231 are enriched in acidic residues; that stretch reads KEDGEEDDDDDEDEDDDDA. In terms of domain architecture, Peptidase S8 spans 277–595; that stretch reads QWYLHNVHKA…YGKLDASKIV (319 aa). N-linked (GlcNAc...) asparagine glycans are attached at residues Asn291 and Asn299. The Charge relay system role is filled by Asp311. N-linked (GlcNAc...) asparagine glycosylation occurs at Asn336. Active-site charge relay system residues include His349 and Ser528. A helical membrane pass occupies residues 524–544; sequence HGGTSAAAPLAAGVFALALSV. The 134-residue stretch at 604–737 folds into the P/Homo B domain; that stretch reads VNNQTSFHSE…QLNVFGEQKD (134 aa). Residue Asn606 is glycosylated (N-linked (GlcNAc...) asparagine). The tract at residues 733–848 is disordered; it reads GEQKDKREEN…SDSHTSWWPD (116 aa). The span at 734-830 shows a compositional bias: basic and acidic residues; it reads EQKDKREENK…EEKPEEKPVD (97 aa). The helical transmembrane segment at 855–875 threads the bilayer; it reads AWLYGAVLLVGGFIAVIGIYA. Asn886 carries N-linked (GlcNAc...) asparagine glycosylation. The tract at residues 914–976 is disordered; that stretch reads PEDTHRRSGD…RDNDRQNLLG (63 aa). 2 stretches are compositionally biased toward basic and acidic residues: residues 915-928 and 940-976; these read EDTH…DRLY and MFRI…NLLG.

It belongs to the peptidase S8 family. Furin subfamily.

Its subcellular location is the membrane. The protein is Dibasic-processing endoprotease (XPR6) of Yarrowia lipolytica (strain CLIB 122 / E 150) (Yeast).